Consider the following 226-residue polypeptide: 2,3-bisphosphoglycerate-dependent phosphoglycerate mutase (226 aa).

Substrate contacts are provided by residues 8–15 (RHGQSVWN), 21–22 (TG), Arg58, 109–112 (ERMY), Lys120, 136–137 (RR), and 180–181 (GN). His9 functions as the Tele-phosphohistidine intermediate in the catalytic mechanism. Glu109 acts as the Proton donor/acceptor in catalysis.

This sequence belongs to the phosphoglycerate mutase family. BPG-dependent PGAM subfamily.

The catalysed reaction is (2R)-2-phosphoglycerate = (2R)-3-phosphoglycerate. The protein operates within carbohydrate degradation; glycolysis; pyruvate from D-glyceraldehyde 3-phosphate: step 3/5. In terms of biological role, catalyzes the interconversion of 2-phosphoglycerate and 3-phosphoglycerate. The polypeptide is 2,3-bisphosphoglycerate-dependent phosphoglycerate mutase (Chlamydia trachomatis serovar L2b (strain UCH-1/proctitis)).